A 273-amino-acid polypeptide reads, in one-letter code: Dermonecrotic toxin LdSicTox-alphaIB1bi (273 aa).

The active site involves His5. Mg(2+)-binding residues include Glu25 and Asp27. The active-site Nucleophile is His41. Intrachain disulfides connect Cys45–Cys51 and Cys47–Cys190. Residue Asp85 participates in Mg(2+) binding. An N-linked (GlcNAc...) asparagine glycan is attached at Asn250.

Belongs to the arthropod phospholipase D family. Class II subfamily. Mg(2+) serves as cofactor. In terms of tissue distribution, expressed by the venom gland.

It is found in the secreted. The catalysed reaction is an N-(acyl)-sphingosylphosphocholine = an N-(acyl)-sphingosyl-1,3-cyclic phosphate + choline. It catalyses the reaction an N-(acyl)-sphingosylphosphoethanolamine = an N-(acyl)-sphingosyl-1,3-cyclic phosphate + ethanolamine. It carries out the reaction a 1-acyl-sn-glycero-3-phosphocholine = a 1-acyl-sn-glycero-2,3-cyclic phosphate + choline. The enzyme catalyses a 1-acyl-sn-glycero-3-phosphoethanolamine = a 1-acyl-sn-glycero-2,3-cyclic phosphate + ethanolamine. In terms of biological role, dermonecrotic toxins cleave the phosphodiester linkage between the phosphate and headgroup of certain phospholipids (sphingolipid and lysolipid substrates), forming an alcohol (often choline) and a cyclic phosphate. This toxin acts on sphingomyelin (SM). It may also act on ceramide phosphoethanolamine (CPE), lysophosphatidylcholine (LPC) and lysophosphatidylethanolamine (LPE), but not on lysophosphatidylserine (LPS), and lysophosphatidylglycerol (LPG). It acts by transphosphatidylation, releasing exclusively cyclic phosphate products as second products. Induces dermonecrosis, hemolysis, increased vascular permeability, edema, inflammatory response, and platelet aggregation. The polypeptide is Dermonecrotic toxin LdSicTox-alphaIB1bi (Loxosceles deserta (Desert recluse spider)).